Consider the following 463-residue polypeptide: MSTNQIILTDQGDNYVNVWSHVAQDLYNHYGETLYNSWFSKVNFIESSLNTVILCAPTNFVRDWIKSKYSMVILQLFQHYNNTIKSIEIITKELPGITQTVIALPTKTFADIGSSELNAENIFSTLDVRFTFDNFVVGAPNELAYAAARAVAESSGAVSESNPLFLYGGVGLGKTHLMHAIGWYIKQNNPSRKVIYMSAEKFMYQFVKALRNKEVISFKEKFRSVDVLMIDDIQFICGKDSTQEEFFHTFNTLIDNNRQMVISCDRSPSDLDNIEDRIKSRLGWGLVADVHSTTYELRLGILESKIEQMNVKIPKDVIDFLASKIVSNVRELEGALNKVIAHSNFTLKEITLENTQNILRDLLRSNERIITVEDIQKKVASRYNIKLSDMSSSRRLREVARPRQIAMYLSKALTPKSLADIGKKFGKKDHTTVMHAIKKVEELLENDIELREEINLLMKILQN.

The tract at residues 1-83 (MSTNQIILTD…LQLFQHYNNT (83 aa)) is domain I, interacts with DnaA modulators. Positions 83–124 (TIKSIEIITKELPGITQTVIALPTKTFADIGSSELNAENIFS) are domain II. The segment at 125–343 (TLDVRFTFDN…GALNKVIAHS (219 aa)) is domain III, AAA+ region. The ATP site is built by G171, G173, K174, and T175. The domain IV, binds dsDNA stretch occupies residues 344-463 (NFTLKEITLE…INLLMKILQN (120 aa)).

Belongs to the DnaA family. As to quaternary structure, oligomerizes as a right-handed, spiral filament on DNA at oriC.

Its subcellular location is the cytoplasm. Plays an essential role in the initiation and regulation of chromosomal replication. ATP-DnaA binds to the origin of replication (oriC) to initiate formation of the DNA replication initiation complex once per cell cycle. Binds the DnaA box (a 9 base pair repeat at the origin) and separates the double-stranded (ds)DNA. Forms a right-handed helical filament on oriC DNA; dsDNA binds to the exterior of the filament while single-stranded (ss)DNA is stabiized in the filament's interior. The ATP-DnaA-oriC complex binds and stabilizes one strand of the AT-rich DNA unwinding element (DUE), permitting loading of DNA polymerase. After initiation quickly degrades to an ADP-DnaA complex that is not apt for DNA replication. Binds acidic phospholipids. In Rickettsia massiliae (strain Mtu5), this protein is Chromosomal replication initiator protein DnaA.